The chain runs to 168 residues: ATP synthase subunit b (168 aa).

The helical transmembrane segment at 9–29 threads the bilayer; that stretch reads AIPFGTIAYTLFIFLLLLVML.

This sequence belongs to the ATPase B chain family. F-type ATPases have 2 components, F(1) - the catalytic core - and F(0) - the membrane proton channel. F(1) has five subunits: alpha(3), beta(3), gamma(1), delta(1), epsilon(1). F(0) has three main subunits: a(1), b(2) and c(10-14). The alpha and beta chains form an alternating ring which encloses part of the gamma chain. F(1) is attached to F(0) by a central stalk formed by the gamma and epsilon chains, while a peripheral stalk is formed by the delta and b chains.

Its subcellular location is the cell membrane. Its function is as follows. F(1)F(0) ATP synthase produces ATP from ADP in the presence of a proton or sodium gradient. F-type ATPases consist of two structural domains, F(1) containing the extramembraneous catalytic core and F(0) containing the membrane proton channel, linked together by a central stalk and a peripheral stalk. During catalysis, ATP synthesis in the catalytic domain of F(1) is coupled via a rotary mechanism of the central stalk subunits to proton translocation. In terms of biological role, component of the F(0) channel, it forms part of the peripheral stalk, linking F(1) to F(0). The chain is ATP synthase subunit b from Bacillus thuringiensis (strain Al Hakam).